Consider the following 103-residue polypeptide: Cell division protein FtsB (103 aa).

Over 1–3 (MGK) the chain is Cytoplasmic. A helical transmembrane segment spans residues 4–21 (LTLLLLAILVWLQYSLWF). The Periplasmic portion of the chain corresponds to 22–103 (GKNGIHDYTR…RAQSAGQNNR (82 aa)). Residues 28–71 (DYTRVNDDVAALQATNAKLKARNDQLFAEIDDLNGGQEALEERA) adopt a coiled-coil conformation.

The protein belongs to the FtsB family. As to quaternary structure, part of a complex composed of FtsB, FtsL and FtsQ.

The protein localises to the cell inner membrane. Essential cell division protein. May link together the upstream cell division proteins, which are predominantly cytoplasmic, with the downstream cell division proteins, which are predominantly periplasmic. The sequence is that of Cell division protein FtsB from Shigella flexneri serotype 5b (strain 8401).